The following is a 97-amino-acid chain: UPF0250 protein HD_2015 (97 aa).

It belongs to the UPF0250 family.

This chain is UPF0250 protein HD_2015, found in Haemophilus ducreyi (strain 35000HP / ATCC 700724).